A 177-amino-acid chain; its full sequence is Large ribosomal subunit protein uL6 (177 aa).

The protein belongs to the universal ribosomal protein uL6 family. Part of the 50S ribosomal subunit.

In terms of biological role, this protein binds to the 23S rRNA, and is important in its secondary structure. It is located near the subunit interface in the base of the L7/L12 stalk, and near the tRNA binding site of the peptidyltransferase center. The chain is Large ribosomal subunit protein uL6 from Aeromonas salmonicida (strain A449).